The primary structure comprises 86 residues: Cytochrome c oxidase subunit 6B1 (86 aa).

Ala-2 is subject to N-acetylalanine. A CHCH domain is found at 27–73; the sequence is TRNCWQNYLDFHRCQKAMTAKGGDISVCEWYQRVYQSLCPTSWVTDW. The Cx9C motif motif lies at 30–40; sequence CWQNYLDFHRC. 2 disulfide bridges follow: Cys-30/Cys-65 and Cys-40/Cys-54. Residues 54-65 carry the Cx10C motif motif; sequence CEWYQRVYQSLC.

The protein belongs to the cytochrome c oxidase subunit 6B family. Component of the cytochrome c oxidase (complex IV, CIV), a multisubunit enzyme composed of 14 subunits. The complex is composed of a catalytic core of 3 subunits MT-CO1, MT-CO2 and MT-CO3, encoded in the mitochondrial DNA, and 11 supernumerary subunits COX4I, COX5A, COX5B, COX6A, COX6B, COX6C, COX7A, COX7B, COX7C, COX8 and NDUFA4, which are encoded in the nuclear genome. The complex exists as a monomer or a dimer and forms supercomplexes (SCs) in the inner mitochondrial membrane with NADH-ubiquinone oxidoreductase (complex I, CI) and ubiquinol-cytochrome c oxidoreductase (cytochrome b-c1 complex, complex III, CIII), resulting in different assemblies (supercomplex SCI(1)III(2)IV(1) and megacomplex MCI(2)III(2)IV(2)).

Its subcellular location is the mitochondrion inner membrane. The protein operates within energy metabolism; oxidative phosphorylation. Component of the cytochrome c oxidase, the last enzyme in the mitochondrial electron transport chain which drives oxidative phosphorylation. The respiratory chain contains 3 multisubunit complexes succinate dehydrogenase (complex II, CII), ubiquinol-cytochrome c oxidoreductase (cytochrome b-c1 complex, complex III, CIII) and cytochrome c oxidase (complex IV, CIV), that cooperate to transfer electrons derived from NADH and succinate to molecular oxygen, creating an electrochemical gradient over the inner membrane that drives transmembrane transport and the ATP synthase. Cytochrome c oxidase is the component of the respiratory chain that catalyzes the reduction of oxygen to water. Electrons originating from reduced cytochrome c in the intermembrane space (IMS) are transferred via the dinuclear copper A center (CU(A)) of subunit 2 and heme A of subunit 1 to the active site in subunit 1, a binuclear center (BNC) formed by heme A3 and copper B (CU(B)). The BNC reduces molecular oxygen to 2 water molecules using 4 electrons from cytochrome c in the IMS and 4 protons from the mitochondrial matrix. In Pongo abelii (Sumatran orangutan), this protein is Cytochrome c oxidase subunit 6B1 (COX6B1).